A 156-amino-acid chain; its full sequence is NAD(P)H-quinone oxidoreductase subunit N (156 aa).

The protein belongs to the complex I NdhN subunit family. As to quaternary structure, NDH-1 can be composed of about 15 different subunits; different subcomplexes with different compositions have been identified which probably have different functions.

The protein localises to the cellular thylakoid membrane. The enzyme catalyses a plastoquinone + NADH + (n+1) H(+)(in) = a plastoquinol + NAD(+) + n H(+)(out). It catalyses the reaction a plastoquinone + NADPH + (n+1) H(+)(in) = a plastoquinol + NADP(+) + n H(+)(out). In terms of biological role, NDH-1 shuttles electrons from an unknown electron donor, via FMN and iron-sulfur (Fe-S) centers, to quinones in the respiratory and/or the photosynthetic chain. The immediate electron acceptor for the enzyme in this species is believed to be plastoquinone. Couples the redox reaction to proton translocation, and thus conserves the redox energy in a proton gradient. Cyanobacterial NDH-1 also plays a role in inorganic carbon-concentration. This chain is NAD(P)H-quinone oxidoreductase subunit N, found in Prochlorococcus marinus subsp. pastoris (strain CCMP1986 / NIES-2087 / MED4).